The chain runs to 336 residues: Fructose-1,6-bisphosphatase class 1 (336 aa).

Mg(2+) contacts are provided by Glu-92, Asp-115, Leu-117, and Asp-118. Substrate is bound by residues 118–121 (DGSS), Asn-211, Tyr-244, 262–264 (YLY), and Lys-274. Position 280 (Glu-280) interacts with Mg(2+).

Belongs to the FBPase class 1 family. As to quaternary structure, homotetramer. The cofactor is Mg(2+).

It localises to the cytoplasm. The enzyme catalyses beta-D-fructose 1,6-bisphosphate + H2O = beta-D-fructose 6-phosphate + phosphate. It participates in carbohydrate biosynthesis; gluconeogenesis. The sequence is that of Fructose-1,6-bisphosphatase class 1 from Aliivibrio salmonicida (strain LFI1238) (Vibrio salmonicida (strain LFI1238)).